The sequence spans 316 residues: Apolipoprotein E (316 aa).

The signal sequence occupies residues methionine 1–alanine 18. A run of 8 repeats spans residues valine 79–alanine 100, proline 101–glycine 122, serine 123–glycine 144, glutamine 145–leucine 166, arginine 167–glutamate 188, arginine 189–alanine 210, threonine 211–histidine 232, and glycine 233–glutamate 254. The tract at residues valine 79–glutamate 254 is 8 X 22 AA approximate tandem repeats. Residue methionine 142 is modified to Methionine sulfoxide. A Phosphoserine modification is found at serine 146. The tract at residues histidine 157–arginine 167 is LDL and other lipoprotein receptors binding. Leucine 161 to arginine 164 contributes to the heparin binding site. Residues alanine 209 to methionine 289 are lipid-binding and lipoprotein association. Residue threonine 211 is glycosylated (O-linked (GalNAc...) threonine). Arginine 228–leucine 235 provides a ligand contact to heparin. Positions serine 265–histidine 316 are homooligomerization. The segment at arginine 277–methionine 289 is specificity for association with VLDL.

The protein belongs to the apolipoprotein A1/A4/E family. As to quaternary structure, homotetramer. May interact with ABCA1; functionally associated with ABCA1 in the biogenesis of HDLs. May interact with APP/A4 amyloid-beta peptide; the interaction is extremely stable in vitro but its physiological significance is unclear. May interact with MAPT. May interact with MAP2. In the cerebrospinal fluid, interacts with secreted SORL1. Interacts with PMEL; this allows the loading of PMEL luminal fragment on ILVs to induce fibril nucleation. Post-translationally, APOE exists as multiple glycosylated and sialylated glycoforms within cells and in plasma. The extent of glycosylation and sialylation are tissue and context specific. In terms of processing, glycated in plasma VLDL. Phosphorylated by FAM20C in the extracellular medium.

The protein localises to the secreted. Its subcellular location is the extracellular space. The protein resides in the extracellular matrix. It localises to the extracellular vesicle. It is found in the endosome. The protein localises to the multivesicular body. In terms of biological role, APOE is an apolipoprotein, a protein associating with lipid particles, that mainly functions in lipoprotein-mediated lipid transport between organs via the plasma and interstitial fluids. APOE is a core component of plasma lipoproteins and is involved in their production, conversion and clearance. Apolipoproteins are amphipathic molecules that interact both with lipids of the lipoprotein particle core and the aqueous environment of the plasma. As such, APOE associates with chylomicrons, chylomicron remnants, very low density lipoproteins (VLDL) and intermediate density lipoproteins (IDL) but shows a preferential binding to high-density lipoproteins (HDL). It also binds a wide range of cellular receptors including the LDL receptor/LDLR and the very low-density lipoprotein receptor/VLDLR that mediate the cellular uptake of the APOE-containing lipoprotein particles. Finally, APOE also has a heparin-binding activity and binds heparan-sulfate proteoglycans on the surface of cells, a property that supports the capture and the receptor-mediated uptake of APOE-containing lipoproteins by cells. The protein is Apolipoprotein E (APOE) of Capra hircus aegagrus (Wild goat).